We begin with the raw amino-acid sequence, 843 residues long: Protein P (843 aa).

Residues 1–177 are terminal protein domain (TP); it reads MPLSYQHFRK…FCGSPYSWEQ (177 aa). The tract at residues 178-346 is spacer; sequence ELQHGRLVFQ…YCLTHIVNLL (169 aa). Disordered stretches follow at residues 224 to 273 and 288 to 316; these read GLQP…SSTS and HLST…RSQS. Polar residues predominate over residues 288-299; the sequence is HLSTSKRQSSSG. The segment at 347 to 690 is polymerase/reverse transcriptase domain (RT); it reads EDWGPCTEHG…YLNLYPVARQ (344 aa). Residues 357-600 form the Reverse transcriptase domain; that stretch reads EHNIRIPRTP…YSLNFMGYVI (244 aa). The Mg(2+) site is built by Asp-429, Asp-551, and Asp-552.

It belongs to the hepadnaviridae P protein family.

It catalyses the reaction DNA(n) + a 2'-deoxyribonucleoside 5'-triphosphate = DNA(n+1) + diphosphate. The catalysed reaction is Endonucleolytic cleavage to 5'-phosphomonoester.. With respect to regulation, activated by host HSP70 and HSP40 in vitro to be able to bind the epsilon loop of the pgRNA. Because deletion of the RNase H region renders the protein partly chaperone-independent, the chaperones may be needed indirectly to relieve occlusion of the RNA-binding site by this domain. Inhibited by several reverse-transcriptase inhibitors: Lamivudine, Adefovir and Entecavir. Functionally, multifunctional enzyme that converts the viral RNA genome into dsDNA in viral cytoplasmic capsids. This enzyme displays a DNA polymerase activity that can copy either DNA or RNA templates, and a ribonuclease H (RNase H) activity that cleaves the RNA strand of RNA-DNA heteroduplexes in a partially processive 3'- to 5'-endonucleasic mode. Neo-synthesized pregenomic RNA (pgRNA) are encapsidated together with the P protein, and reverse-transcribed inside the nucleocapsid. Initiation of reverse-transcription occurs first by binding the epsilon loop on the pgRNA genome, and is initiated by protein priming, thereby the 5'-end of (-)DNA is covalently linked to P protein. Partial (+)DNA is synthesized from the (-)DNA template and generates the relaxed circular DNA (RC-DNA) genome. After budding and infection, the RC-DNA migrates in the nucleus, and is converted into a plasmid-like covalently closed circular DNA (cccDNA). The activity of P protein does not seem to be necessary for cccDNA generation, and is presumably released from (+)DNA by host nuclear DNA repair machinery. This is Protein P from Homo sapiens (Human).